The following is a 310-amino-acid chain: Methionyl-tRNA formyltransferase (310 aa).

Residue 110–113 (SVLP) participates in (6S)-5,6,7,8-tetrahydrofolate binding.

It belongs to the Fmt family.

The catalysed reaction is L-methionyl-tRNA(fMet) + (6R)-10-formyltetrahydrofolate = N-formyl-L-methionyl-tRNA(fMet) + (6S)-5,6,7,8-tetrahydrofolate + H(+). Functionally, attaches a formyl group to the free amino group of methionyl-tRNA(fMet). The formyl group appears to play a dual role in the initiator identity of N-formylmethionyl-tRNA by promoting its recognition by IF2 and preventing the misappropriation of this tRNA by the elongation apparatus. The chain is Methionyl-tRNA formyltransferase from Mycolicibacterium vanbaalenii (strain DSM 7251 / JCM 13017 / BCRC 16820 / KCTC 9966 / NRRL B-24157 / PYR-1) (Mycobacterium vanbaalenii).